The sequence spans 353 residues: Fe(3+) ions import ATP-binding protein FbpC (353 aa).

The ABC transporter domain occupies 9–239 (VTFENVTKKF…PASAFIADFM (231 aa)). ATP is bound at residue 41-48 (GPSGCGKT).

The protein belongs to the ABC transporter superfamily. Fe(3+) ion importer (TC 3.A.1.10) family. As to quaternary structure, the complex is composed of two ATP-binding proteins (FbpC), two transmembrane proteins (FbpB) and a solute-binding protein (FbpA).

The protein localises to the cell inner membrane. The catalysed reaction is Fe(3+)(out) + ATP + H2O = Fe(3+)(in) + ADP + phosphate + H(+). In terms of biological role, part of the ABC transporter complex FbpABC involved in Fe(3+) ions import. Responsible for energy coupling to the transport system. This Brucella abortus (strain 2308) protein is Fe(3+) ions import ATP-binding protein FbpC.